The following is a 238-amino-acid chain: Ribonuclease PH (238 aa).

Phosphate contacts are provided by residues arginine 86 and 124–126 (GTR).

This sequence belongs to the RNase PH family. Homohexameric ring arranged as a trimer of dimers.

It carries out the reaction tRNA(n+1) + phosphate = tRNA(n) + a ribonucleoside 5'-diphosphate. Functionally, phosphorolytic 3'-5' exoribonuclease that plays an important role in tRNA 3'-end maturation. Removes nucleotide residues following the 3'-CCA terminus of tRNAs; can also add nucleotides to the ends of RNA molecules by using nucleoside diphosphates as substrates, but this may not be physiologically important. Probably plays a role in initiation of 16S rRNA degradation (leading to ribosome degradation) during starvation. The protein is Ribonuclease PH of Parvibaculum lavamentivorans (strain DS-1 / DSM 13023 / NCIMB 13966).